The primary structure comprises 679 residues: MNRIFRNTIFYLLIFLVIVGIVSVFNSDQTETENVSFNEFAERLENGQVQELSVKPERQVYLVRGQFNDQAEDEFFQTYALRSEQTAELLFNAEDPTGTPFNLEIEPADETSGWVQFFTGIIPFIIIFILFFFLLSQAQGGGSRVMNFGKSKAKMVNEDKKKAKFKDVAGADEEKQELVEVVEFLKDPRKFSAIGARIPKGVLLVGPPGTGKTLLARAVAGEAGVPFFSISGSDFVEMFVGVGASRVRDLFENAKKNAPCIIFIDEIDAVGRQRGAGLGGGHDEREQTLNQLLVEMDGFSANEGIIIIAATNRADILDPALLRPGRFDRQIQVNRPDVNGREEVLKVHARNKPLNDDVNLKTIATRTPGFSGADLENLLNEAALVAARHDHTKISMIHIEEAIDRVIAGPAKKSRVISPKEKKIVAWHEAGHTVVGVKLENADMVHKVTIVPRGMAGGYAVMLPKEDRYFMTQPELLDKIIGLLGGRVAEEVTFGEVSTGAHNDFQRATGIARKMVTEYGMSEKLGPMQFISGSGGQVFLGRDIQNEQNYSDAIAHEIDLEVQRIIKECYARCKQILLENKDSLDLVAKTLLDMETLDAEQIKSLVHEGKLPDDHHLNAHLEKEKASESDVKVNINSKKEETPQVEAEQPQEPNTDEPIEKDPSVEDNRSFEDDTNKKE.

Residues 1–6 are Cytoplasmic-facing; sequence MNRIFR. A helical membrane pass occupies residues 7–27; that stretch reads NTIFYLLIFLVIVGIVSVFNS. The Extracellular segment spans residues 28 to 114; the sequence is DQTETENVSF…IEPADETSGW (87 aa). The chain crosses the membrane as a helical span at residues 115–135; that stretch reads VQFFTGIIPFIIIFILFFFLL. The Cytoplasmic segment spans residues 136 to 679; that stretch reads SQAQGGGSRV…SFEDDTNKKE (544 aa). Position 206–213 (206–213) interacts with ATP; sequence GPPGTGKT. Residue H428 participates in Zn(2+) binding. E429 is a catalytic residue. The Zn(2+) site is built by H432 and D504. Basic and acidic residues-rich tracts occupy residues 621–642 and 658–679; these read LEKE…KEET and PIEK…NKKE. The segment at 621–679 is disordered; it reads LEKEKASESDVKVNINSKKEETPQVEAEQPQEPNTDEPIEKDPSVEDNRSFEDDTNKKE.

The protein in the central section; belongs to the AAA ATPase family. In the C-terminal section; belongs to the peptidase M41 family. As to quaternary structure, homohexamer. The cofactor is Zn(2+).

The protein localises to the cell membrane. In terms of biological role, acts as a processive, ATP-dependent zinc metallopeptidase for both cytoplasmic and membrane proteins. Plays a role in the quality control of integral membrane proteins. The polypeptide is ATP-dependent zinc metalloprotease FtsH (Alkalihalophilus pseudofirmus (strain ATCC BAA-2126 / JCM 17055 / OF4) (Bacillus pseudofirmus)).